The following is a 360-amino-acid chain: GTP 3',8-cyclase (360 aa).

The disordered stretch occupies residues 1 to 31 (MTVTALGVPTVRGRSEGSAVASDAPGDGPLL). Positions 33 to 251 (RFGRSATDLR…LQPHFRLRPD (219 aa)) constitute a Radical SAM core domain. R42 serves as a coordination point for GTP. C49 and C53 together coordinate [4Fe-4S] cluster. Y55 provides a ligand contact to S-adenosyl-L-methionine. C56 is a binding site for [4Fe-4S] cluster. R93 serves as a coordination point for GTP. G97 is a binding site for S-adenosyl-L-methionine. GTP is bound at residue T124. Residue S148 participates in S-adenosyl-L-methionine binding. Residue K185 coordinates GTP. Residue M219 coordinates S-adenosyl-L-methionine. Residues C287 and C290 each coordinate [4Fe-4S] cluster. Residue 292–294 (RTR) participates in GTP binding. C304 contacts [4Fe-4S] cluster.

It belongs to the radical SAM superfamily. MoaA family. In terms of assembly, monomer and homodimer. Requires [4Fe-4S] cluster as cofactor.

It carries out the reaction GTP + AH2 + S-adenosyl-L-methionine = (8S)-3',8-cyclo-7,8-dihydroguanosine 5'-triphosphate + 5'-deoxyadenosine + L-methionine + A + H(+). It participates in cofactor biosynthesis; molybdopterin biosynthesis. Functionally, catalyzes the cyclization of GTP to (8S)-3',8-cyclo-7,8-dihydroguanosine 5'-triphosphate. This Mycobacterium ulcerans (strain Agy99) protein is GTP 3',8-cyclase.